A 199-amino-acid chain; its full sequence is dITP/XTP pyrophosphatase (199 aa).

A substrate-binding site is contributed by 7 to 12 (TSNRGK). Catalysis depends on Asp74, which acts as the Proton acceptor. Residue Asp74 participates in Mg(2+) binding. Residues Ser75, 156 to 159 (FGYD), Lys179, and 184 to 185 (HR) each bind substrate.

This sequence belongs to the HAM1 NTPase family. In terms of assembly, homodimer. Mg(2+) is required as a cofactor.

The enzyme catalyses XTP + H2O = XMP + diphosphate + H(+). It carries out the reaction dITP + H2O = dIMP + diphosphate + H(+). The catalysed reaction is ITP + H2O = IMP + diphosphate + H(+). Its function is as follows. Pyrophosphatase that catalyzes the hydrolysis of nucleoside triphosphates to their monophosphate derivatives, with a high preference for the non-canonical purine nucleotides XTP (xanthosine triphosphate), dITP (deoxyinosine triphosphate) and ITP. Seems to function as a house-cleaning enzyme that removes non-canonical purine nucleotides from the nucleotide pool, thus preventing their incorporation into DNA/RNA and avoiding chromosomal lesions. This is dITP/XTP pyrophosphatase from Sulfurimonas denitrificans (strain ATCC 33889 / DSM 1251) (Thiomicrospira denitrificans (strain ATCC 33889 / DSM 1251)).